A 209-amino-acid polypeptide reads, in one-letter code: Protein lin-28 homolog A (209 aa).

Residues 1–31 (MGSVSNQQFAGGCAKAAEEAPEEAPEDAARA) form a disordered region. At Gly-2 the chain carries N-acetylglycine. A Phosphoserine modification is found at Ser-3. The 74-residue stretch at 39–112 (HGAGICKWFN…GLESIRVTGP (74 aa)) folds into the CSD domain. The segment at 113-136 (GGVFCIGSERRPKGKSMQKRRSKG) is flexible linker. Ser-120 is subject to Phosphoserine. 2 CCHC-type zinc fingers span residues 137–154 (DRCY…ECKL) and 159–176 (KKCH…SCPL). Residues 178-209 (AQQGPSAQGKPTYFREEEEEIHSPTLLPEAQN) are disordered. Phosphoserine is present on Ser-200.

The protein belongs to the lin-28 family. In terms of assembly, monomer. During skeletal muscle differentiation, associated with translation initiation complexes in the polysomal compartment. Directly interacts with EIF3S2. Interacts with NCL in an RNA-dependent manner. Interacts (via C-terminus) with DHX9 (via N- and C-terminus); this interaction occurs in a RNA-independent manner. Interacts with TUT4 in the presence of pre-let-7 RNA. As to expression, expressed in embryonic stem cells, placenta and testis. Tends to be up-regulated in HER2-overexpressing breast tumors.

It localises to the cytoplasm. The protein localises to the rough endoplasmic reticulum. The protein resides in the P-body. Its subcellular location is the stress granule. It is found in the nucleus. It localises to the nucleolus. Functionally, RNA-binding protein that inhibits processing of pre-let-7 miRNAs and regulates translation of mRNAs that control developmental timing, pluripotency and metabolism. Seems to recognize a common structural G-quartet (G4) feature in its miRNA and mRNA targets. 'Translational enhancer' that drives specific mRNAs to polysomes and increases the efficiency of protein synthesis. Its association with the translational machinery and target mRNAs results in an increased number of initiation events per molecule of mRNA and, indirectly, in mRNA stabilization. Binds IGF2 mRNA, MYOD1 mRNA, ARBP/36B4 ribosomal protein mRNA and its own mRNA. Essential for skeletal muscle differentiation program through the translational up-regulation of IGF2 expression. Suppressor of microRNA (miRNA) biogenesis, including that of let-7, miR107, miR-143 and miR-200c. Specifically binds the miRNA precursors (pre-miRNAs), recognizing an 5'-GGAG-3' motif found in pre-miRNA terminal loop, and recruits TUT4 and TUT7 uridylyltransferases. This results in the terminal uridylation of target pre-miRNAs. Uridylated pre-miRNAs fail to be processed by Dicer and undergo degradation. The repression of let-7 expression is required for normal development and contributes to maintain the pluripotent state by preventing let-7-mediated differentiation of embryonic stem cells. Localized to the periendoplasmic reticulum area, binds to a large number of spliced mRNAs and inhibits the translation of mRNAs destined for the ER, reducing the synthesis of transmembrane proteins, ER or Golgi lumen proteins, and secretory proteins. Binds to and enhances the translation of mRNAs for several metabolic enzymes, such as PFKP, PDHA1 or SDHA, increasing glycolysis and oxidative phosphorylation. Which, with the let-7 repression may enhance tissue repair in adult tissue. The chain is Protein lin-28 homolog A (LIN28A) from Homo sapiens (Human).